Here is a 432-residue protein sequence, read N- to C-terminus: MQVSVETTQGLGRRVTITIAADSIETAVKSELVNVAKKVRIDGFRKGKVPMNIVAQRYGASVRQDVLGDLMSRNFIDAIIKEKINPAGAPTYVPGEYKLGEDFTYSVEFEVYPEVELQGLEAIEVEKPIVEVTDADVDGMLDTLRKQQATWKEKDSAVEAEDRVTIDFTGSVDSEEFEGGKASDFVLAMGQGRMIPGFEDGIKGHKAGEEFTIDVTFPEEYHAENLKGKAAKFAINLKKVEERELPELTAEFIKRFGVEDGSVEGLRAEVRKNMERELKSAIRNRVKSQAIEGLVKANDIDVPAALIDSEIDVLRRQAAQRFGGNEKQALELPRELFEEQAKRRVVVGLLLGEVIRTNELKADEERVKGLIEEMASAYEDPKEVIEFYSKNKELMDNMRNVALEEQAVEAVLAKAKVTEKETTFNELMNQQA.

Residues 161 to 246 (EDRVTIDFTG…LKKVEERELP (86 aa)) enclose the PPIase FKBP-type domain.

Belongs to the FKBP-type PPIase family. Tig subfamily. As to quaternary structure, homodimer and monomer. In vivo most of the ribosomes are in complex with monomeric TF. Uncomplexed TF, however, is in a monomer-dimer equilibrium with approximately two thirds of TF existing in a dimeric state.

Its subcellular location is the cytoplasm. It catalyses the reaction [protein]-peptidylproline (omega=180) = [protein]-peptidylproline (omega=0). Involved in protein export. Acts as a chaperone by maintaining the newly synthesized protein in an open conformation. Functions as a peptidyl-prolyl cis-trans isomerase. The chain is Trigger factor from Shigella boydii serotype 4 (strain Sb227).